Reading from the N-terminus, the 333-residue chain is Protoheme IX farnesyltransferase (333 aa).

The next 8 membrane-spanning stretches (helical) occupy residues 36-56 (LIPL…GWPL), 61-81 (LVCT…LNCL), 107-127 (AAFA…VSGV), 130-150 (LAAG…TALL), 158-178 (IVIG…AATG), 186-206 (WLFA…ALLL), 243-263 (FLGV…LLPF), and 284-304 (AKGL…LLVF).

The protein belongs to the UbiA prenyltransferase family. Protoheme IX farnesyltransferase subfamily.

It localises to the cell inner membrane. The catalysed reaction is heme b + (2E,6E)-farnesyl diphosphate + H2O = Fe(II)-heme o + diphosphate. It participates in porphyrin-containing compound metabolism; heme O biosynthesis; heme O from protoheme: step 1/1. In terms of biological role, converts heme B (protoheme IX) to heme O by substitution of the vinyl group on carbon 2 of heme B porphyrin ring with a hydroxyethyl farnesyl side group. The chain is Protoheme IX farnesyltransferase from Synechococcus sp. (strain WH7803).